The chain runs to 304 residues: Fructose permease IIC component (304 aa).

Residues 1–304 enclose the PTS EIIC type-2 domain; the sequence is IHSADPKDPT…GIIKKPVEEK (304 aa). 8 helical membrane-spanning segments follow: residues 20–40, 62–82, 98–118, 140–160, 181–201, 214–234, 238–258, and 277–297; these read FIGSDNALKLIVAVLAGFIAM, NAGFLGGLIAGFLAGYVVILL, PVLIYPLLGIFITGVLMQFVI, NLVLMGIILGGMMAIDMGGPL, AAIMAGGMVPPLGIALATTFF, ITCYFMGAAFVTEGAIPFAAA, VIPAAVIGSAVAGGLTEFFRV, and LLYLLSIVIGAIVTAVILGII.

The protein resides in the cell membrane. Its function is as follows. The phosphoenolpyruvate-dependent sugar phosphotransferase system (PTS), a major carbohydrate active -transport system, catalyzes the phosphorylation of incoming sugar substrates concomitant with their translocation across the cell membrane. This system is involved in fructose transport. This chain is Fructose permease IIC component (fruA), found in Bacillus amyloliquefaciens (Bacillus velezensis).